The chain runs to 25 residues: Histone H1.1 (25 aa).

The H15 domain maps to 1 to 25 (MVSEAIAALKEREGSSEFAIGKKKE). The disordered stretch occupies residues 1-25 (MVSEAIAALKEREGSSEFAIGKKKE). The span at 9-25 (LKEREGSSEFAIGKKKE) shows a compositional bias: basic and acidic residues.

The protein resides in the nucleus. Its subcellular location is the chromosome. Its function is as follows. Histones H1 are necessary for the condensation of nucleosome chains into higher-order structures. The chain is Histone H1.1 from Triticum aestivum (Wheat).